The primary structure comprises 775 residues: MINIIIKANMKKIILQGYDVGDFSNQQSIVPIYKGNNIEAYLAQKAPEAREIFIYAHGSQYFSHEHSLPQLSLTLQSSNNELVPSILSKITENTEENKPNIVHILSCHASTAHYNMQNINGNIVLCTYAPANYVSNGYVAELLFNTKNNFDNLNDFIVKKLPLLTAISFGISYKLDENVYPLIFDNSSIKGMDINSFSEFLQKQYIKVQKFYTNLQEKYVDKYPELFPEYNFPEKISYSTEELKQAFNVLLNLDSEKLSIEEIQHLLAIDNSHVGNILADAIKCNRTDAIEVVINTMKEATTVDLHSAVKFNNLAVLNRLLDKTEKVENCILQEAIQEHKIEIAEMLINSNKIKSFTNDYLLVAINANNLPILKILLNKEENIVGYLLYRAAELENINTAETVELLFDKTKETDYFINTRVLLRAVKENCLSLINKVIGRMNEFDDIPDVIFDSVIERGNTQIIKILLEKIASFDFLIKAINSNNLPAVEDILKTIKVENKDIAAIIMSGNTDMFKILANKIGDDKILDIAIKLGDSSVVNNILDEKEKQGILDSNKLDEIFETAVKNSNGNVIEDIMNRMPEVTGKHLTIAMQYYAPERAFIFDKVYNSIKQIEYNLILTAIDSGIPDVIQKLVSKLGDEKKASILYDILRSSDIVKNMVVSNILLNNIAKIPDNYKYALLDLTSKGNSYGIKNFFIFNRLLEKSGPIDEEHLNTYLGLLDPSDMFSIMCMGSLYNMKHLASNHNNITTVEDTIVDNLTVTGEINITPSDVNLL.

6 ANK repeats span residues 66–95, 300–329, 331–356, 357–385, 447–476, and 523–552; these read HSLP…ENTE, ATTV…KVEN, ILQE…IKSF, TNDY…NIVG, IPDV…SFDF, and GDDK…KQGI.

In Rickettsia bellii (strain RML369-C), this protein is Putative ankyrin repeat protein RBE_0801.